The primary structure comprises 526 residues: Ferrochelatase-2, chloroplastic (526 aa).

The protein belongs to the ferrochelatase family.

The protein localises to the plastid. It localises to the chloroplast. It catalyses the reaction heme b + 2 H(+) = protoporphyrin IX + Fe(2+). It functions in the pathway porphyrin-containing compound metabolism; protoheme biosynthesis; protoheme from protoporphyrin-IX: step 1/1. Catalyzes the ferrous insertion into protoporphyrin IX. The chain is Ferrochelatase-2, chloroplastic from Oryza sativa subsp. japonica (Rice).